Here is a 505-residue protein sequence, read N- to C-terminus: Trans-cinnamate 4-monooxygenase (505 aa).

A helical transmembrane segment spans residues 3 to 23 (LLLLEKTLLALFLAAITAITI). Residues 213-218 (RSRLAQ) and Ala-306 each bind (E)-cinnamate. Cys-447 contacts heme.

Belongs to the cytochrome P450 family. Heme is required as a cofactor.

It is found in the membrane. It catalyses the reaction (E)-cinnamate + reduced [NADPH--hemoprotein reductase] + O2 = (E)-4-coumarate + oxidized [NADPH--hemoprotein reductase] + H2O + H(+). It functions in the pathway phenylpropanoid metabolism; trans-4-coumarate biosynthesis; trans-4-coumarate from trans-cinnamate: step 1/1. Functionally, catalyzes the first oxidative step of the phenylpropanoid pathway in higher plants by transforming trans-cinnamate into p-coumarate. The compounds formed by this pathway are essential components for lignification, pollination, and defense against ultraviolet light, predators and pathogens. This chain is Trans-cinnamate 4-monooxygenase (CYP73A9), found in Pisum sativum (Garden pea).